Reading from the N-terminus, the 400-residue chain is MDKSLFEQARPILEQIQDNGFEAYYVGGSVRDYVMGRNIHDIDITTSATPDEIESIFSHTIPVGKEHGTINVVFNDENYEVTTFRAEEDYVDHRRPSGVTFVRDLYEDLQRRDFTMNAIAMDTAYKLYDYFDGQQDINNRIIRTVGIAEERFQEDALRMIRCLRFQSQLSFDIATETFEAMRIQMADIKFLSIERIVIELTKLMRGINVEKSFNHLKSLKAFNYMPYFEHLDMNQINVTEAIDLELLIAIVSVKFDINYSLKPLKLSNRQVKDINQYIQIMNALPSIITKEQLKMFVYDYDTHLIKNVMVAADVLKANDIQGHEPLIVNLQTIDETLHRLPMHNRKDMMVNGGVLMAHLNAKSGPWLKDVLRQIEIAIVTGKVSNEETEILKWVDNHVKI.

The ATP site is built by G28 and R31. G28 and R31 together coordinate CTP. Positions 41 and 43 each coordinate Mg(2+). ATP contacts are provided by R112, D155, R158, R161, and R164. R112, D155, R158, R161, and R164 together coordinate CTP.

The protein belongs to the tRNA nucleotidyltransferase/poly(A) polymerase family. Bacterial CCA-adding enzyme type 3 subfamily. In terms of assembly, homodimer. Mg(2+) serves as cofactor.

It carries out the reaction a tRNA precursor + 2 CTP + ATP = a tRNA with a 3' CCA end + 3 diphosphate. It catalyses the reaction a tRNA with a 3' CCA end + 2 CTP + ATP = a tRNA with a 3' CCACCA end + 3 diphosphate. Functionally, catalyzes the addition and repair of the essential 3'-terminal CCA sequence in tRNAs without using a nucleic acid template. Adds these three nucleotides in the order of C, C, and A to the tRNA nucleotide-73, using CTP and ATP as substrates and producing inorganic pyrophosphate. tRNA 3'-terminal CCA addition is required both for tRNA processing and repair. Also involved in tRNA surveillance by mediating tandem CCA addition to generate a CCACCA at the 3' terminus of unstable tRNAs. While stable tRNAs receive only 3'-terminal CCA, unstable tRNAs are marked with CCACCA and rapidly degraded. The protein is CCA-adding enzyme of Staphylococcus aureus (strain COL).